The sequence spans 283 residues: MTKIAIVTDSTAYLGPKRAKELGVIVVPLSVVFGEEAYQEEVELSSADFYEKLKHEEKLPTTSQPAVGLFVETFERLAKEGFEVVISIHLSSKISGTYQSALTAGSMVEGIEVIGYDSGISCEPQANFVAEAAKLVKEGADPQTIIDHLDEVKKRTNALFVVHDLSHLHRGGRLNAAQLVVGSLLKIKPILHFEDGSIVPLEKVRTEKKAWARVKELFAEEASSASSVKATVIHANRLDGAEKLADEIRSQFSHVDVSISHFGPVIGTHLGEGSIGLSWYIEK.

Positions 4 to 281 (IAIVTDSTAY…EGSIGLSWYI (278 aa)) constitute a DegV domain. Hexadecanoate-binding residues include Thr62 and Ser95.

Its function is as follows. May bind long-chain fatty acids, such as palmitate, and may play a role in lipid transport or fatty acid metabolism. The chain is DegV domain-containing protein BH3627 from Halalkalibacterium halodurans (strain ATCC BAA-125 / DSM 18197 / FERM 7344 / JCM 9153 / C-125) (Bacillus halodurans).